Here is a 235-residue protein sequence, read N- to C-terminus: Elongation factor Tu, chloroplastic (235 aa).

In terms of domain architecture, tr-type G spans 1–125 (KNMITGAAQM…EVDNYIPLPT (125 aa)). A GTP-binding site is contributed by 47–50 (NKAD).

Belongs to the TRAFAC class translation factor GTPase superfamily. Classic translation factor GTPase family. EF-Tu/EF-1A subfamily.

Its subcellular location is the plastid. It localises to the chloroplast. It carries out the reaction GTP + H2O = GDP + phosphate + H(+). In terms of biological role, GTP hydrolase that promotes the GTP-dependent binding of aminoacyl-tRNA to the A-site of ribosomes during protein biosynthesis. This is Elongation factor Tu, chloroplastic (tufA) from Bryopsis plumosa (Green alga).